The chain runs to 56 residues: Large ribosomal subunit protein bL32 (56 aa).

Residues 1–38 (MAVQQNKKSRSRRDMRRSHDALTTAAVSVDKTSGETHL) form a disordered region. The segment covering 7–16 (KKSRSRRDMR) has biased composition (basic residues).

Belongs to the bacterial ribosomal protein bL32 family.

This Histophilus somni (strain 129Pt) (Haemophilus somnus) protein is Large ribosomal subunit protein bL32.